The sequence spans 313 residues: Malate dehydrogenase (313 aa).

NAD(+) is bound by residues 11–16 and Asp-35; that span reads GAGNIG. Residues Arg-84 and Arg-90 each coordinate substrate. NAD(+) is bound by residues Asn-97 and 120–122; that span reads VTN. Substrate contacts are provided by Asn-122 and Arg-153. His-177 serves as the catalytic Proton acceptor.

Belongs to the LDH/MDH superfamily. MDH type 3 family.

It carries out the reaction (S)-malate + NAD(+) = oxaloacetate + NADH + H(+). Functionally, catalyzes the reversible oxidation of malate to oxaloacetate. The protein is Malate dehydrogenase of Ehrlichia canis (strain Jake).